A 307-amino-acid polypeptide reads, in one-letter code: UDP-3-O-acyl-N-acetylglucosamine deacetylase (307 aa).

The Zn(2+) site is built by His78, His241, and Asp245. The active-site Proton donor is the His268.

The protein belongs to the LpxC family. It depends on Zn(2+) as a cofactor.

The catalysed reaction is a UDP-3-O-[(3R)-3-hydroxyacyl]-N-acetyl-alpha-D-glucosamine + H2O = a UDP-3-O-[(3R)-3-hydroxyacyl]-alpha-D-glucosamine + acetate. The protein operates within glycolipid biosynthesis; lipid IV(A) biosynthesis; lipid IV(A) from (3R)-3-hydroxytetradecanoyl-[acyl-carrier-protein] and UDP-N-acetyl-alpha-D-glucosamine: step 2/6. In terms of biological role, catalyzes the hydrolysis of UDP-3-O-myristoyl-N-acetylglucosamine to form UDP-3-O-myristoylglucosamine and acetate, the committed step in lipid A biosynthesis. The sequence is that of UDP-3-O-acyl-N-acetylglucosamine deacetylase from Acidovorax sp. (strain JS42).